The chain runs to 346 residues: Annexin A1 (346 aa).

The residue at position 5 (serine 5) is a Phosphoserine; by TRPM7. Residue glutamine 19 forms an Isoglutamyl lysine isopeptide (Gln-Lys) (interchain with K-?) linkage. Residue tyrosine 21 is modified to Phosphotyrosine; by EGFR. Phosphoserine occurs at positions 34 and 37. 4 Annexin repeats span residues 42 to 113 (FNPS…ALLK), 114 to 185 (TPAR…SLAK), 197 to 269 (DLAD…AIVK), and 273 to 344 (SKPM…ALCG). Lysine 58 is modified (N6-acetyllysine). Glycine 59, valine 60, glutamate 62, lysine 97, leucine 100, glutamate 105, methionine 127, glycine 129, glycine 131, threonine 132, and glutamate 134 together coordinate Ca(2+). Threonine 136 is subject to Phosphothreonine. Ca(2+) contacts are provided by aspartate 171, glycine 210, and arginine 213. A Glycyl lysine isopeptide (Lys-Gly) (interchain with G-Cter in SUMO1); alternate cross-link involves residue lysine 214. Lysine 214 is covalently cross-linked (Glycyl lysine isopeptide (Lys-Gly) (interchain with G-Cter in SUMO2); alternate). Residues glycine 215, aspartate 253, glutamate 255, and methionine 256 each coordinate Ca(2+). Lysine 257 participates in a covalent cross-link: Glycyl lysine isopeptide (Lys-Gly) (interchain with G-Cter in SUMO1). Ca(2+) contacts are provided by glutamate 261, methionine 286, glycine 288, and glycine 290. Residue lysine 312 is modified to N6-acetyllysine. A disulfide bridge links cysteine 324 with cysteine 343. 3 residues coordinate Ca(2+): leucine 328, glutamate 330, and threonine 331. Residue lysine 332 forms a Glycyl lysine isopeptide (Lys-Gly) (interchain with G-Cter in SUMO1) linkage. Position 336 (glutamate 336) interacts with Ca(2+).

It belongs to the annexin family. Homodimer; non-covalently linked. Homodimer; linked by transglutamylation. Homodimers linked by transglutamylation are observed in placenta, but not in other tissues. Interacts with S100A11. Heterotetramer, formed by two molecules each of S100A11 and ANXA1. Interacts with DYSF. Interacts with EGFR. In terms of processing, phosphorylated by protein kinase C, EGFR and TRPM7. Phosphorylated in response to EGF treatment. Post-translationally, sumoylated. Proteolytically cleaved by cathepsin CTSG to release the active N-terminal peptide Ac2-26.

It is found in the nucleus. The protein resides in the cytoplasm. It localises to the cell projection. The protein localises to the cilium. Its subcellular location is the basolateral cell membrane. It is found in the lateral cell membrane. The protein resides in the cell membrane. It localises to the apical cell membrane. The protein localises to the membrane. Its subcellular location is the early endosome. It is found in the cytoplasmic vesicle membrane. The protein resides in the endosome membrane. It localises to the secreted. The protein localises to the extracellular space. Its subcellular location is the extracellular exosome. It is found in the cytoplasmic vesicle. The protein resides in the secretory vesicle lumen. It localises to the phagocytic cup. Plays important roles in the innate immune response as effector of glucocorticoid-mediated responses and regulator of the inflammatory process. Has anti-inflammatory activity. Plays a role in glucocorticoid-mediated down-regulation of the early phase of the inflammatory response. Contributes to the adaptive immune response by enhancing signaling cascades that are triggered by T-cell activation, regulates differentiation and proliferation of activated T-cells. Promotes the differentiation of T-cells into Th1 cells and negatively regulates differentiation into Th2 cells. Has no effect on unstimulated T-cells. Negatively regulates hormone exocytosis via activation of the formyl peptide receptors and reorganization of the actin cytoskeleton. Has high affinity for Ca(2+) and can bind up to eight Ca(2+) ions. Displays Ca(2+)-dependent binding to phospholipid membranes. Plays a role in the formation of phagocytic cups and phagosomes. Plays a role in phagocytosis by mediating the Ca(2+)-dependent interaction between phagosomes and the actin cytoskeleton. Functionally, functions at least in part by activating the formyl peptide receptors and downstream signaling cascades. Promotes chemotaxis of granulocytes and monocytes via activation of the formyl peptide receptors. Promotes rearrangement of the actin cytoskeleton, cell polarization and cell migration. Promotes resolution of inflammation and wound healing. Acts via neutrophil N-formyl peptide receptors to enhance the release of CXCL2. This is Annexin A1 (ANXA1) from Equus caballus (Horse).